We begin with the raw amino-acid sequence, 371 residues long: F-box protein At2g26850 (371 aa).

The F-box domain maps to 59–105; the sequence is KMSILDLPDLPLDCILELLPPSELCTMARVCSSLRERCVSDHLWEKH.

The sequence is that of F-box protein At2g26850 from Arabidopsis thaliana (Mouse-ear cress).